The sequence spans 568 residues: Acetyl-coenzyme A carboxylase carboxyl transferase subunits beta/alpha (568 aa).

The acetyl-coenzyme A carboxylase carboxyl transferase subunit beta stretch occupies residues Met1–Gly253. Residues Arg21–Thr290 enclose the CoA carboxyltransferase N-terminal domain. The tract at residues Arg21–Glu536 is carboxyltransferase. Zn(2+) is bound by residues Cys25, Cys28, Cys44, and Cys47. The segment at Cys25–Cys47 adopts a C4-type zinc-finger fold. The acetyl-coenzyme A carboxylase carboxyl transferase subunit alpha stretch occupies residues Met254–Pro559. Residues Arg286–Glu536 form the CoA carboxyltransferase C-terminal domain.

The protein in the N-terminal section; belongs to the AccD/PCCB family. It in the C-terminal section; belongs to the AccA family. Acetyl-CoA carboxylase is a heterotetramer composed of biotin carboxyl carrier protein (AccB), biotin carboxylase (AccC) and two subunits of ACCase subunit beta/alpha. It depends on Zn(2+) as a cofactor.

The protein resides in the cytoplasm. The catalysed reaction is N(6)-carboxybiotinyl-L-lysyl-[protein] + acetyl-CoA = N(6)-biotinyl-L-lysyl-[protein] + malonyl-CoA. It functions in the pathway lipid metabolism; malonyl-CoA biosynthesis; malonyl-CoA from acetyl-CoA: step 1/1. Its function is as follows. Component of the acetyl coenzyme A carboxylase (ACC) complex. Biotin carboxylase (BC) catalyzes the carboxylation of biotin on its carrier protein (BCCP) and then the CO(2) group is transferred by the transcarboxylase to acetyl-CoA to form malonyl-CoA. This is Acetyl-coenzyme A carboxylase carboxyl transferase subunits beta/alpha (accD) from Saccharopolyspora erythraea (strain ATCC 11635 / DSM 40517 / JCM 4748 / NBRC 13426 / NCIMB 8594 / NRRL 2338).